The sequence spans 631 residues: Plastidic ATP/ADP-transporter (631 aa).

11 consecutive transmembrane segments (helical) span residues 106–126, 149–169, 180–200, 238–258, 271–290, 313–333, 369–389, 407–427, 442–462, 465–485, and 543–563; these read IELV…CILF, IIPF…MLLY, ALFY…GFVL, LFYV…FWGF, FYPL…GRTV, GMMS…WWVN, LATL…TWKS, DFST…QWIF, VLLL…PLAP, AKFG…QNIF, and LASS…AWLG. The disordered stretch occupies residues 586–631; it reads ERASLKIPVVSQNENGNGPLSSESSLNPAGGDSTNASSEPSSPRSL. Polar residues predominate over residues 595 to 631; sequence VSQNENGNGPLSSESSLNPAGGDSTNASSEPSSPRSL.

It belongs to the ADP/ATP translocase tlc (TC 2.A.12.2) family.

It is found in the plastid. Its subcellular location is the chloroplast membrane. The polypeptide is Plastidic ATP/ADP-transporter (Solanum tuberosum (Potato)).